A 218-amino-acid chain; its full sequence is Ribose-5-phosphate isomerase A (218 aa).

Substrate contacts are provided by residues 28–31 (TGST), 81–84 (DGAD), and 94–97 (KGGG). E103 acts as the Proton acceptor in catalysis. Position 121 (K121) interacts with substrate.

The protein belongs to the ribose 5-phosphate isomerase family. Homodimer.

The enzyme catalyses aldehydo-D-ribose 5-phosphate = D-ribulose 5-phosphate. The protein operates within carbohydrate degradation; pentose phosphate pathway; D-ribose 5-phosphate from D-ribulose 5-phosphate (non-oxidative stage): step 1/1. Functionally, catalyzes the reversible conversion of ribose-5-phosphate to ribulose 5-phosphate. The sequence is that of Ribose-5-phosphate isomerase A from Pseudoalteromonas atlantica (strain T6c / ATCC BAA-1087).